An 89-amino-acid chain; its full sequence is Small ribosomal subunit protein uS15 (89 aa).

This sequence belongs to the universal ribosomal protein uS15 family. In terms of assembly, part of the 30S ribosomal subunit. Forms a bridge to the 50S subunit in the 70S ribosome, contacting the 23S rRNA.

In terms of biological role, one of the primary rRNA binding proteins, it binds directly to 16S rRNA where it helps nucleate assembly of the platform of the 30S subunit by binding and bridging several RNA helices of the 16S rRNA. Its function is as follows. Forms an intersubunit bridge (bridge B4) with the 23S rRNA of the 50S subunit in the ribosome. This is Small ribosomal subunit protein uS15 from Paenarthrobacter aurescens (strain TC1).